The primary structure comprises 613 residues: MAEAKTHWLGAVLSLIPLIFLLSEAEAASFQRNQLLQKEPDLRLENVQRFPSPEMIRALEYIEKLRQQAHKEESSPDYNPYQGVSVPLQQKENGDLPESSRDSLSEDEWMKIIAEALRQAENEPQSAPKENKPYTLNSEKNFPMDMPDDYETQQWAERKLKHMRFPPMYEENSRDNPFKRTNEIVEEQYTPQNLATLESVFQELGKLTGPNSQKRERADEEQKLYTDDEDDIYKANNIAYEDVVGGEDWNPVEEKIESQTQEEVRDSKENADKTEQINDEMKRSGQLGLQDEDLRKESKDQLSDDVSKVITYLKRLVNAAGSGRSQNGQTGERAIRLFEKPLDPQSIYQLIEISRNLQIPPEDLIDMLKTGEKPVEPEQELEIPVEPEDISEVDLDHPDLFQNKMLSKNGYPKAPGHAVAEALSEGLSVEDILNLLGMESAANPKPPYFPNQYNREKVLSRLPYGPGRSKANQLPKAVWMPDVENRQMAYENLNDKDQELGEYLARMLVKYPEIMNANPAKRVPSQGSTEDDRQDENQIEQALKEHLSQHSSQETDKLASVSKRLPVGTPKSDDTPNRPYLDEDLLVKVLEYLNQEKAEKGREHIAKRAMENM.

The signal sequence occupies residues 1–27 (MAEAKTHWLGAVLSLIPLIFLLSEAEA). A propeptide spanning residues 28–30 (ASF) is cleaved from the precursor. Disordered stretches follow at residues 67–105 (QQAHKEESSPDYNPYQGVSVPLQQKENGDLPESSRDSLS) and 119–146 (QAENEPQSAPKENKPYTLNSEKNFPMDM). Residues 92–105 (ENGDLPESSRDSLS) show a composition bias toward basic and acidic residues. Position 150 is a sulfotyrosine (Tyr150). A phosphoserine mark is found at Ser173, Ser267, Ser428, Ser528, Ser551, and Ser552. The span at 257–283 (ESQTQEEVRDSKENADKTEQINDEMKR) shows a compositional bias: basic and acidic residues. The tract at residues 257–287 (ESQTQEEVRDSKENADKTEQINDEMKRSGQL) is disordered. The segment covering 546-557 (HLSQHSSQETDK) has biased composition (basic and acidic residues). The interval 546 to 580 (HLSQHSSQETDKLASVSKRLPVGTPKSDDTPNRPY) is disordered.

This sequence belongs to the chromogranin/secretogranin protein family. As to quaternary structure, interacts with Secretogranin III/SCG3. Highest levels detected in anterior pituitary followed by adrenal medulla and posterior pituitary (at protein level). In the brain, high levels are found in the hypothalamus, comparable to those present in posterior pituitary with two- to six-fold lower levels present in the other brain regions investigated including caudate nucleus, hippocampus, thalamus and brainstem (at protein level).

The protein resides in the secreted. Neuroendocrine protein of the granin family that regulates the biogenesis of secretory granules. In Bos taurus (Bovine), this protein is Secretogranin-2 (SCG2).